The chain runs to 333 residues: MSNDTQPKIAIIGYGSQGRAHALNLRDSGFDVTVGLRPGGPTESKAQADGFTVVAPSEAVKSADLVAILTPDMVQKKLYEDVIAPNMKQGACLLFAHGLNVHFDMITPRADLDVVLVAPKGPGALVRREYEIGRGVPCIYAVYQDTSGKAEQFALTYAGGLGGARANIIKTTFKEETETDLFGEQAVLCGGASSLVQAGFEVLVEAGYQPEIAYYEVLHELKLIVDLFYEGGITRMLEFVSETAQYGDYVSGPRVIDASTKARMKDVLTDIQNGTFTKNWVAEYEAGLPNYTKFKQADLEHPIEEVGKKLRAKMVWLNGEQQAAAAPANQQAA.

The 171-residue stretch at 1–171 (MSNDTQPKIA…GGARANIIKT (171 aa)) folds into the KARI N-terminal Rossmann domain. Residues 14-17 (YGSQ), Arg37, Thr42, and 72-75 (DMVQ) contribute to the NADP(+) site. His97 is an active-site residue. Gly123 provides a ligand contact to NADP(+). The KARI C-terminal knotted domain maps to 172 to 317 (TFKEETETDL…KKLRAKMVWL (146 aa)). Residues Asp180, Glu184, Glu216, and Glu220 each coordinate Mg(2+). Ser241 provides a ligand contact to substrate.

It belongs to the ketol-acid reductoisomerase family. Mg(2+) is required as a cofactor.

It catalyses the reaction (2R)-2,3-dihydroxy-3-methylbutanoate + NADP(+) = (2S)-2-acetolactate + NADPH + H(+). The enzyme catalyses (2R,3R)-2,3-dihydroxy-3-methylpentanoate + NADP(+) = (S)-2-ethyl-2-hydroxy-3-oxobutanoate + NADPH + H(+). It functions in the pathway amino-acid biosynthesis; L-isoleucine biosynthesis; L-isoleucine from 2-oxobutanoate: step 2/4. The protein operates within amino-acid biosynthesis; L-valine biosynthesis; L-valine from pyruvate: step 2/4. In terms of biological role, involved in the biosynthesis of branched-chain amino acids (BCAA). Catalyzes an alkyl-migration followed by a ketol-acid reduction of (S)-2-acetolactate (S2AL) to yield (R)-2,3-dihydroxy-isovalerate. In the isomerase reaction, S2AL is rearranged via a Mg-dependent methyl migration to produce 3-hydroxy-3-methyl-2-ketobutyrate (HMKB). In the reductase reaction, this 2-ketoacid undergoes a metal-dependent reduction by NADPH to yield (R)-2,3-dihydroxy-isovalerate. The chain is Ketol-acid reductoisomerase (NADP(+)) from Xanthomonas oryzae pv. oryzae (strain MAFF 311018).